Here is a 1366-residue protein sequence, read N- to C-terminus: MTSSKPKKTSRVRKTTKNSKKNNPVTMPVLPKTPPSFKNKVVDKKALKNLVSWAYKTHGTAITSAMADNLKDLGFKYATQAAVSISVDDLKVPEAKQDLIGQAEEQISATEECYRLGEITEVERHTKVIDTWTETNERLVDAVKNNFNQNDPLNSVWMMANSGARGNMSQVRQLVGMRGLMANPQGEIIDLPIRTNFREGLTVTEYVISSYGARKGLVDTALRTADSGYLTRRLVDVAQDVIVREEDCGTELSIVVEAEDGKFGARLLGRLTAEDIFDAEENIVVSQNTAIDPSLSEEIEKASINKVKIRSPLTCEANRSVCRRCYGWALAHNHLVDLGEAVGIIAAQSIGEPGTQLTMRTFHTGGVSTAESGVVRSRISGKVEFSSKAKVRGYRTPHGVEAKQAEVDFTLKIVPQSNNSGKAQKIEVSSGSLLFVDDGEEINSDITVAQITAGAVKKSVEKATKDVICDLAGQVRYDKVIQPKEVTDRQGNITLKAQRLGRLWVLAGDVYNLPPNARPVISSGKNVDEGTVLAEASQSSEFGGQVRLRESIGDSREVQIVTTSMSLTNFKLIEESTHSGQIYNLESSDGTSYRLNISPGSKINSGEVIADLTDERFRTKTGGLIKYAPGLSVKKARSSKNGFEVSQGGTLLWIPQETHEINKDISLLMIEDMKWIEAGTEVVKDIFSQTSGIVTVTQKNDILREITVRNGNFYECDDEEVLNRFTEEGNLVNPGEKILDGVDNTEILFVQKLETSKCRGLLLRTVEEFTIPDQAELPQLSHVKQEKGPHLGLKAIQRLTYKDGELIKSVEGVELLRTHLSIESFDATPQMTIDVESIKDDKDESINRLNLVILESILVRRDTVSDASHGSTHTELQVNNNQLVKAGDVIATTQILCKEKGLVQLPNVVDDEPIRRLIVEREQDKIKVKISDKAVVKVGDRVVDGDPITKTVKSTSCGEIEEISNSSVTLRLGRPYMVSPDSVLHVKDGDLVLRGDGLALLVFERQKTGDIVQGLPRIEELLEARRPRDSATLCKKSGIVQIKKGNDEESVSLSVIEKDDLVNEYQLLIGKNIMVSDGQQVTGGESLTDGPINPHELLDCYFNDLKDQKPLIDAARESISKLQRSMVSEVQNVYKSQGVAIDDKHIEVIVRQMTSKVRIEDAGDTTLLPGELIELRQVEDTNQAMAITGGAPAEFTPVLLGITKASLNTDSFISAASFQETTRVLTEAAIEGKSDWLRGLKENVIIGRLIPAGTGFSGFVEELSSEAGPHPDILAEESGGYRRAQNLRPDYTVDMPQSPAVSSTAILDDPSDEDLETTRNRHGIDPSSSNFAAFARPNAENQFSEDQLPDPAALEGLQEEGLLSDE.

Residues 1–20 (MTSSKPKKTSRVRKTTKNSK) are compositionally biased toward basic residues. The tract at residues 1–37 (MTSSKPKKTSRVRKTTKNSKKNNPVTMPVLPKTPPSF) is disordered. Positions 248, 315, 322, and 325 each coordinate Zn(2+). The segment at 1292–1366 (TVDMPQSPAV…LQEEGLLSDE (75 aa)) is disordered. Positions 1354 to 1366 (LEGLQEEGLLSDE) are enriched in low complexity.

This sequence belongs to the RNA polymerase beta' chain family. RpoC2 subfamily. In terms of assembly, in cyanobacteria the RNAP catalytic core is composed of 2 alpha, 1 beta, 1 beta', 1 gamma and 1 omega subunit. When a sigma factor is associated with the core the holoenzyme is formed, which can initiate transcription. The cofactor is Zn(2+).

It catalyses the reaction RNA(n) + a ribonucleoside 5'-triphosphate = RNA(n+1) + diphosphate. Its function is as follows. DNA-dependent RNA polymerase catalyzes the transcription of DNA into RNA using the four ribonucleoside triphosphates as substrates. The chain is DNA-directed RNA polymerase subunit beta' from Prochlorococcus marinus (strain MIT 9215).